The chain runs to 341 residues: Ribosomal RNA small subunit methyltransferase C (341 aa).

The protein belongs to the methyltransferase superfamily. RsmC family. As to quaternary structure, monomer.

The protein resides in the cytoplasm. The enzyme catalyses guanosine(1207) in 16S rRNA + S-adenosyl-L-methionine = N(2)-methylguanosine(1207) in 16S rRNA + S-adenosyl-L-homocysteine + H(+). In terms of biological role, specifically methylates the guanine in position 1207 of 16S rRNA in the 30S particle. The polypeptide is Ribosomal RNA small subunit methyltransferase C (Shewanella halifaxensis (strain HAW-EB4)).